Reading from the N-terminus, the 311-residue chain is Dihydroorotate dehydrogenase A (fumarate) (311 aa).

Residues Ser-19 and 43-44 contribute to the FMN site; that span reads KS. Substrate is bound by residues Lys-43, 67–71, and Asn-127; that span reads NSMGL. FMN is bound at residue Asn-127. Cys-130 serves as the catalytic Nucleophile. 2 residues coordinate FMN: Lys-164 and Val-192. Position 193–194 (193–194) interacts with substrate; it reads NS. FMN-binding positions include Gly-221, 249–250, and 271–272; these read GG and GT.

It belongs to the dihydroorotate dehydrogenase family. Type 1 subfamily. Homodimer. FMN is required as a cofactor.

The protein resides in the cytoplasm. The enzyme catalyses (S)-dihydroorotate + fumarate = orotate + succinate. It participates in pyrimidine metabolism; UMP biosynthesis via de novo pathway. Its function is as follows. Catalyzes the conversion of dihydroorotate to orotate with fumarate as the electron acceptor. In Lactococcus lactis subsp. cremoris (Streptococcus cremoris), this protein is Dihydroorotate dehydrogenase A (fumarate) (pyrDA).